The following is a 292-amino-acid chain: Sulfofructosephosphate aldolase (292 aa).

Catalysis depends on K193, which acts as the Schiff-base intermediate with substrate.

Belongs to the aldolase LacD family. In terms of assembly, homotetramer.

The catalysed reaction is 6-deoxy-6-sulfo-D-fructose 1-phosphate = (2S)-3-sulfolactaldehyde + dihydroxyacetone phosphate. Functionally, cleaves 6-deoxy-6-sulfo-D-fructose 1-phosphate (SFP) to form dihydroxyacetone phosphate (DHAP) and 3-sulfolactaldehyde (SLA). Can also catalyze the reverse reaction. This Salmonella typhimurium (strain LT2 / SGSC1412 / ATCC 700720) protein is Sulfofructosephosphate aldolase (yihT).